Reading from the N-terminus, the 137-residue chain is MERTFAIIKPDAVERNITGKVLDKIEGAGFKIVGMKKIHLTKNEAEGFYYVHKERPFFNDLCTFMSRNPVVVLALEKENAIAAWRELMGATNPANAEAGTIRKDFGVSIEENTVHGSDSPESAAFEIPYFFSQLELV.

ATP-binding residues include lysine 9, phenylalanine 57, arginine 85, threonine 91, arginine 102, and asparagine 112. Catalysis depends on histidine 115, which acts as the Pros-phosphohistidine intermediate.

This sequence belongs to the NDK family. In terms of assembly, homotetramer. Mg(2+) serves as cofactor.

It localises to the cytoplasm. It catalyses the reaction a 2'-deoxyribonucleoside 5'-diphosphate + ATP = a 2'-deoxyribonucleoside 5'-triphosphate + ADP. It carries out the reaction a ribonucleoside 5'-diphosphate + ATP = a ribonucleoside 5'-triphosphate + ADP. Functionally, major role in the synthesis of nucleoside triphosphates other than ATP. The ATP gamma phosphate is transferred to the NDP beta phosphate via a ping-pong mechanism, using a phosphorylated active-site intermediate. The chain is Nucleoside diphosphate kinase from Geotalea uraniireducens (strain Rf4) (Geobacter uraniireducens).